We begin with the raw amino-acid sequence, 226 residues long: Ribonuclease 3 (226 aa).

The RNase III domain maps to 4 to 127 (LEEFEKKLGY…VMGAIYLEKG (124 aa)). Residue glutamate 40 coordinates Mg(2+). Residue aspartate 44 is part of the active site. Mg(2+) is bound by residues asparagine 113 and glutamate 116. Glutamate 116 is a catalytic residue. The DRBM domain maps to 154–223 (DFKTALQEFT…AKEALKILKA (70 aa)).

The protein belongs to the ribonuclease III family. Homodimer. Mg(2+) serves as cofactor.

It is found in the cytoplasm. The enzyme catalyses Endonucleolytic cleavage to 5'-phosphomonoester.. Digests double-stranded RNA. Involved in the processing of primary rRNA transcript to yield the immediate precursors to the large and small rRNAs (23S and 16S). Processes some mRNAs, and tRNAs when they are encoded in the rRNA operon. Processes pre-crRNA and tracrRNA of type II CRISPR loci if present in the organism. The protein is Ribonuclease 3 of Nitratiruptor sp. (strain SB155-2).